The following is a 740-amino-acid chain: DNA ligase (740 aa).

The segment at 1–20 (MGPGLTLSGMTEQSSLFPAP) is disordered. NAD(+) contacts are provided by residues 56-60 (DAEYD), 105-106 (SI), and Glu-142. The N6-AMP-lysine intermediate role is filled by Lys-144. Positions 165, 201, 322, and 346 each coordinate NAD(+). The Zn(2+) site is built by Cys-471, Cys-474, Cys-489, and Cys-495. In terms of domain architecture, BRCT spans 654-740 (AATLPLAGMT…RGAPPNAGGG (87 aa)).

The protein belongs to the NAD-dependent DNA ligase family. LigA subfamily. Mg(2+) serves as cofactor. Requires Mn(2+) as cofactor.

It carries out the reaction NAD(+) + (deoxyribonucleotide)n-3'-hydroxyl + 5'-phospho-(deoxyribonucleotide)m = (deoxyribonucleotide)n+m + AMP + beta-nicotinamide D-nucleotide.. Functionally, DNA ligase that catalyzes the formation of phosphodiester linkages between 5'-phosphoryl and 3'-hydroxyl groups in double-stranded DNA using NAD as a coenzyme and as the energy source for the reaction. It is essential for DNA replication and repair of damaged DNA. The polypeptide is DNA ligase (Acidovorax ebreus (strain TPSY) (Diaphorobacter sp. (strain TPSY))).